Here is a 479-residue protein sequence, read N- to C-terminus: Catalase easC (479 aa).

Residues 1-13 (MASQVSLTAQGSG) are compositionally biased toward polar residues. The interval 1 to 28 (MASQVSLTAQGSGLSAPLNGPEHLTSTT) is disordered. His53 is a catalytic residue. Tyr343 is a binding site for heme. The segment at 365–385 (HAANDAPKTKKPAVPLQKQSR) is disordered.

It belongs to the catalase family. Requires heme as cofactor.

It functions in the pathway alkaloid biosynthesis; ergot alkaloid biosynthesis. Catalase; part of the gene cluster that mediates the biosynthesis of fungal ergot alkaloid. DmaW catalyzes the first step of ergot alkaloid biosynthesis by condensing dimethylallyl diphosphate (DMAP) and tryptophan to form 4-dimethylallyl-L-tryptophan. The second step is catalyzed by the methyltransferase easF that methylates 4-dimethylallyl-L-tryptophan in the presence of S-adenosyl-L-methionine, resulting in the formation of 4-dimethylallyl-L-abrine. The catalase easC and the FAD-dependent oxidoreductase easE then transform 4-dimethylallyl-L-abrine to chanoclavine-I which is further oxidized by easD in the presence of NAD(+), resulting in the formation of chanoclavine-I aldehyde. Agroclavine dehydrogenase easG then mediates the conversion of chanoclavine-I aldehyde to agroclavine via a non-enzymatic adduct reaction: the substrate is an iminium intermediate that is formed spontaneously from chanoclavine-I aldehyde in the presence of glutathione. Further conversion of agroclavine to paspalic acid is a two-step process involving oxidation of agroclavine to elymoclavine and of elymoclavine to paspalic acid, the second step being performed by the elymoclavine oxidase cloA. However, cloA does not encode a functional enzyme indicating that C.fusiformis terminates its ergot alkaloid pathway at elymoclavine. This chain is Catalase easC, found in Claviceps fusiformis (Ergot fungus).